The sequence spans 212 residues: Uridine kinase (212 aa).

Gly-13–Ser-20 is a binding site for ATP.

It belongs to the uridine kinase family.

The protein resides in the cytoplasm. It carries out the reaction uridine + ATP = UMP + ADP + H(+). The catalysed reaction is cytidine + ATP = CMP + ADP + H(+). It participates in pyrimidine metabolism; CTP biosynthesis via salvage pathway; CTP from cytidine: step 1/3. Its pathway is pyrimidine metabolism; UMP biosynthesis via salvage pathway; UMP from uridine: step 1/1. The chain is Uridine kinase from Shewanella frigidimarina (strain NCIMB 400).